The following is a 285-amino-acid chain: Ribonuclease Z (285 aa).

Residues histidine 61, histidine 63, aspartate 65, histidine 66, histidine 152, aspartate 175, and histidine 239 each contribute to the Zn(2+) site. Aspartate 65 acts as the Proton acceptor in catalysis.

Belongs to the RNase Z family. As to quaternary structure, homodimer. It depends on Zn(2+) as a cofactor.

It carries out the reaction Endonucleolytic cleavage of RNA, removing extra 3' nucleotides from tRNA precursor, generating 3' termini of tRNAs. A 3'-hydroxy group is left at the tRNA terminus and a 5'-phosphoryl group is left at the trailer molecule.. Its function is as follows. Zinc phosphodiesterase, which displays some tRNA 3'-processing endonuclease activity. Probably involved in tRNA maturation, by removing a 3'-trailer from precursor tRNA. The polypeptide is Ribonuclease Z (Mycobacterium sp. (strain JLS)).